Here is a 238-residue protein sequence, read N- to C-terminus: Uridylate kinase (238 aa).

Residue 12-15 (KLSG) participates in ATP binding. G54 is a UMP binding site. ATP is bound by residues G55 and R59. UMP contacts are provided by residues D74 and 135 to 142 (TGNPYFTT). The ATP site is built by T162, N163, Y168, and D171.

The protein belongs to the UMP kinase family. Homohexamer.

The protein localises to the cytoplasm. The enzyme catalyses UMP + ATP = UDP + ADP. It functions in the pathway pyrimidine metabolism; CTP biosynthesis via de novo pathway; UDP from UMP (UMPK route): step 1/1. Its activity is regulated as follows. Inhibited by UTP. Its function is as follows. Catalyzes the reversible phosphorylation of UMP to UDP. The protein is Uridylate kinase of Bradyrhizobium sp. (strain ORS 278).